The sequence spans 271 residues: Putative glucose-6-phosphate 1-epimerase (271 aa).

Arg-71 and Arg-93 together coordinate substrate. Residue His-151 is part of the active site. Position 193 (Asp-193) interacts with substrate. Residue Glu-249 is part of the active site.

The protein belongs to the glucose-6-phosphate 1-epimerase family.

The enzyme catalyses alpha-D-glucose 6-phosphate = beta-D-glucose 6-phosphate. This Haemophilus influenzae (strain ATCC 51907 / DSM 11121 / KW20 / Rd) protein is Putative glucose-6-phosphate 1-epimerase.